Consider the following 360-residue polypeptide: MKSSIVAKLEALYERHEEVQALLGDAATIADQDKFRALSREYAQLSDVARCYTDWRQVQEDIETAQMMLDDPEMREMAQEELRDAKEKGDQLEQQLQVLLLPKDPDDERNAFVEVRAGTGGDEAALFAGDLFRMYTRYAESRRWQVEILSANEGEHGGFKEVIAKISGDGVYGRLKFESGGHRVQRVPATESQGRIHTSACTVAVMPELPEAEMPDINPADLRIDTFRSSGAGGQHVNTTDSAIRITHLPTGIVVECQDERSQHKNKAKALSVLGARIRAAEVAKRQQAEASTRRNLLGSGDRSDRNRTYNFPQGRVTDHRINLTLYRLDEAMEGKLDMLIEPIVQEHQADQLAALSEQE.

Glutamine 235 bears the N5-methylglutamine mark. A disordered region spans residues 285 to 314; sequence KRQQAEASTRRNLLGSGDRSDRNRTYNFPQ.

It belongs to the prokaryotic/mitochondrial release factor family. Methylated by PrmC. Methylation increases the termination efficiency of RF1.

It localises to the cytoplasm. Peptide chain release factor 1 directs the termination of translation in response to the peptide chain termination codons UAG and UAA. The sequence is that of Peptide chain release factor 1 from Klebsiella pneumoniae subsp. pneumoniae (strain ATCC 700721 / MGH 78578).